A 457-amino-acid chain; its full sequence is Flavohemoprotein-1 (457 aa).

Residues 2–157 enclose the Globin domain; that stretch reads ALSEDTIKAV…LADLLIKREE (156 aa). His106 is a heme b binding site. Catalysis depends on charge relay system residues Tyr116 and Glu156. The segment at 168 to 456 is reductase; the sequence is GGWRQTRTFR…FEMFGPFKAS (289 aa). The region spanning 171-278 is the FAD-binding FR-type domain; the sequence is RQTRTFRVEE…APPYGDFFLR (108 aa). Residues Tyr210 and 227–230 each bind FAD; that span reads RQYS. An NADP(+)-binding site is contributed by 320-325; it reads GIGQTP. 449 to 452 is an FAD binding site; it reads MFGP.

The protein belongs to the globin family. Two-domain flavohemoproteins subfamily. It in the C-terminal section; belongs to the flavoprotein pyridine nucleotide cytochrome reductase family. As to quaternary structure, monomer. Heme b serves as cofactor. It depends on FAD as a cofactor.

The enzyme catalyses 2 nitric oxide + NADPH + 2 O2 = 2 nitrate + NADP(+) + H(+). The catalysed reaction is 2 nitric oxide + NADH + 2 O2 = 2 nitrate + NAD(+) + H(+). Flavohemoprotein involved in nitric oxide (NO) detoxification in an aerobic process, termed nitric oxide dioxygenase (NOD) reaction that utilizes O(2) and NAD(P)H to convert NO to nitrate, which protects the protozoan parasite from various noxious nitrogen compounds. Therefore, plays a central role in the inducible response to nitrosative stress. May also be involved in O(2) detoxification. In Giardia intestinalis (strain P15) (Giardia lamblia), this protein is Flavohemoprotein-1 (hmpA-1).